The chain runs to 81 residues: Putative membrane protein insertion efficiency factor (81 aa).

A disordered region spans residues 61–81 (NDGGYDPVPPAPSSRTSSIAE).

The protein belongs to the UPF0161 family.

The protein localises to the cell inner membrane. Could be involved in insertion of integral membrane proteins into the membrane. The protein is Putative membrane protein insertion efficiency factor of Pseudomonas putida (strain ATCC 47054 / DSM 6125 / CFBP 8728 / NCIMB 11950 / KT2440).